The primary structure comprises 189 residues: CDP-archaeol synthase (189 aa).

5 helical membrane-spanning segments follow: residues 6–26 (VAIA…AVLA), 71–91 (GVVL…TVGV), 96–116 (IAAA…ASFL), 125–145 (GAAF…ALTA), and 162–184 (VAIF…AFGL).

It belongs to the CDP-archaeol synthase family. Mg(2+) is required as a cofactor.

The protein localises to the cell membrane. It catalyses the reaction 2,3-bis-O-(geranylgeranyl)-sn-glycerol 1-phosphate + CTP + H(+) = CDP-2,3-bis-O-(geranylgeranyl)-sn-glycerol + diphosphate. It functions in the pathway membrane lipid metabolism; glycerophospholipid metabolism. In terms of biological role, catalyzes the formation of CDP-2,3-bis-(O-geranylgeranyl)-sn-glycerol (CDP-archaeol) from 2,3-bis-(O-geranylgeranyl)-sn-glycerol 1-phosphate (DGGGP) and CTP. This reaction is the third ether-bond-formation step in the biosynthesis of archaeal membrane lipids. The polypeptide is CDP-archaeol synthase (Natronomonas pharaonis (strain ATCC 35678 / DSM 2160 / CIP 103997 / JCM 8858 / NBRC 14720 / NCIMB 2260 / Gabara) (Halobacterium pharaonis)).